We begin with the raw amino-acid sequence, 257 residues long: Global transcriptional regulator CodY (257 aa).

A GAF domain region spans residues 1–155 (MSLLSKTREL…AATVIGMEIL (155 aa)). Residues 203-222 (ASKVADRVGITRSVIVNALR) constitute a DNA-binding region (H-T-H motif).

The protein belongs to the CodY family.

The protein localises to the cytoplasm. In terms of biological role, DNA-binding global transcriptional regulator which is involved in the adaptive response to starvation and acts by directly or indirectly controlling the expression of numerous genes in response to nutrient availability. During rapid exponential growth, CodY is highly active and represses genes whose products allow adaptation to nutrient depletion. This is Global transcriptional regulator CodY from Staphylococcus haemolyticus (strain JCSC1435).